We begin with the raw amino-acid sequence, 479 residues long: GTPase Obg (479 aa).

Residues 2-159 (PRFVDRVVIH…RDLTLELKTV (158 aa)) enclose the Obg domain. One can recognise an OBG-type G domain in the interval 160 to 340 (ADVGLVGFPS…LIFGLWQMVS (181 aa)). GTP contacts are provided by residues 166 to 173 (GFPSAGKS), 191 to 195 (FTTLV), 212 to 215 (DVPG), 292 to 295 (NKID), and 321 to 323 (STV). Mg(2+) is bound by residues Ser-173 and Thr-193. The OCT domain maps to 358–436 (PVPVDDSGFD…IGEMTFDWEP (79 aa)). Residues 438–479 (TPAGGHVAMSGRGTDVRLERSDRVGAAERKAARRQRRERDDD) are disordered. The segment covering 451–467 (TDVRLERSDRVGAAERK) has biased composition (basic and acidic residues).

The protein belongs to the TRAFAC class OBG-HflX-like GTPase superfamily. OBG GTPase family. As to quaternary structure, monomer. Mg(2+) serves as cofactor.

The protein resides in the cytoplasm. Its function is as follows. An essential GTPase which binds GTP, GDP and possibly (p)ppGpp with moderate affinity, with high nucleotide exchange rates and a fairly low GTP hydrolysis rate. Plays a role in control of the cell cycle, stress response, ribosome biogenesis and in those bacteria that undergo differentiation, in morphogenesis control. This is GTPase Obg from Mycobacterium marinum (strain ATCC BAA-535 / M).